A 519-amino-acid polypeptide reads, in one-letter code: F-box-like/WD repeat-containing protein TBL1XR1-A (519 aa).

Residues 4–36 (SSDEVNFLVYRYLQESGFSHSAFTFGIESHISQ) form the LisH domain. The region spanning 41–86 (GALAPPAALISIIQKGLQYVEAEVSINEDGTLFDGRPIESLSLIDA) is the F-box-like domain. Over residues 115-139 (AAAAAATPNNQQPPAKNGENTANGE) the composition is skewed to low complexity. Positions 115–147 (AAAAAATPNNQQPPAKNGENTANGEENGGHALA) are disordered. WD repeat units lie at residues 172–211 (GHESEVFICAWNPVSDLLASGSGDSTARIWNLSENSTSGS), 228–267 (PSNKDVTSLDWNSEGTLLATGSYDGFARIWTKDGNLASTL), 269–308 (QHKGPIFALKWNKKGNFILSAGVDKTTIIWDAHTGEAKQQ), 311–349 (FHSAPALDVDWQSNNTFASCSTDMCIHVCKLGQDRPIKT), 352–391 (GHTNEVNAIKWDPTGNLLASCSDDMTLKIWSMKHDTCVHD), 394–442 (AHNK…CIHT), 445–484 (KHQEPVYSVAFSPDGRYLASGSFDKCVHIWNTQTGALVHS), and 486–519 (RGTGGIFEVCWNAAGDKVGASASDGSVCVLDLRK).

This sequence belongs to the WD repeat EBI family. Interacts with heterodimers of rxra and thrb, and this interaction is abrogated by thyroid hormone binding to thrb. Interacts with ncor1.

It localises to the nucleus. F-box-like protein which acts as an integral component of the N-CoR transcriptional corepressor complex. Probably regulates transcription activation mediated by nuclear receptors. May mediate the recruitment of the 19S proteasome complex, leading to the subsequent proteasomal degradation of the N-CoR complex, thereby allowing cofactor exchange and transcription activation. This chain is F-box-like/WD repeat-containing protein TBL1XR1-A (tbl1xr1-a), found in Xenopus laevis (African clawed frog).